The primary structure comprises 246 residues: Heavy metal-associated isoprenylated plant protein 8 (246 aa).

The segment at 1–31 (MGKNKQNGESDNKSEKKNQKNGDSSVDKSDK) is disordered. One can recognise an HMA 1 domain in the interval 35–99 (CKEIVLKVYM…RVQKKFSRNA (65 aa)). A metal cation is bound by residues Cys46 and Cys49. The disordered stretch occupies residues 96–122 (SRNAEMISPKHNPKQDQKEPQQKKESA). Basic and acidic residues predominate over residues 108–122 (PKQDQKEPQQKKESA). The 65-residue stretch at 125–189 (IKTAILRMNM…IKKKLGKHAE (65 aa)) folds into the HMA 2 domain. Residues Cys136 and Cys139 each coordinate a metal cation. The disordered stretch occupies residues 191–226 (LSQITEKGKDNNKKNNNKKEESDGNKIFSYPPQYSS). The segment covering 196 to 214 (EKGKDNNKKNNNKKEESDG) has biased composition (basic and acidic residues). Cys243 carries the post-translational modification Cysteine methyl ester. Residue Cys243 is the site of S-farnesyl cysteine attachment. The propeptide at 244-246 (SIM) is removed in mature form.

It belongs to the HIPP family.

Functionally, heavy-metal-binding protein. In Arabidopsis thaliana (Mouse-ear cress), this protein is Heavy metal-associated isoprenylated plant protein 8.